We begin with the raw amino-acid sequence, 149 residues long: Transcriptional repressor NrdR (149 aa).

A zinc finger lies at 3–34 (CPFCAAVDTKVIDSRLVSDGSQVRRRRQCLDC). The region spanning 49-139 (PRVIKSDDVR…VYRSFEDIRE (91 aa)) is the ATP-cone domain.

This sequence belongs to the NrdR family. It depends on Zn(2+) as a cofactor.

Negatively regulates transcription of bacterial ribonucleotide reductase nrd genes and operons by binding to NrdR-boxes. This Yersinia enterocolitica serotype O:8 / biotype 1B (strain NCTC 13174 / 8081) protein is Transcriptional repressor NrdR.